The sequence spans 367 residues: Acryloyl-CoA reductase electron transfer subunit beta (367 aa).

FAD is bound at residue 305 to 333; the sequence is VYVALGISGAIQHKAGMQDSELIIAVNKD.

Heterohexadecamer; tetramer of tetramers. Each tetramer is composed of 2 alpha (AcrC), a beta (AcrA) and a gamma (AcrB) subunit.

The protein localises to the cytoplasm. Functionally, part of the ETF-acryloyl-CoA reductase complex involved in the pathway of L-alanine fermentation. The electron transfer flavoprotein (ETF) serves as a specific electron acceptor for acryloyl-CoA reductase. The sequence is that of Acryloyl-CoA reductase electron transfer subunit beta (acrA) from Anaerotignum propionicum (Clostridium propionicum).